The primary structure comprises 495 residues: L-2,4-diaminobutyrate decarboxylase (495 aa).

Lys312 carries the N6-(pyridoxal phosphate)lysine modification.

This sequence belongs to the group II decarboxylase family. The cofactor is pyridoxal 5'-phosphate.

The enzyme catalyses L-2,4-diaminobutanoate + H(+) = propane-1,3-diamine + CO2. The protein operates within siderophore biosynthesis; rhizobactin biosynthesis. This is L-2,4-diaminobutyrate decarboxylase (rhbB) from Rhizobium meliloti (strain 1021) (Ensifer meliloti).